We begin with the raw amino-acid sequence, 559 residues long: Nucleoprotein (559 aa).

Residues 53–235 (MRKEKRTDSD…ITQEQSQINI (183 aa)) are binding site for the cap structure m7GTP. Mn(2+) is bound by residues Asp-378 and Glu-380. Zn(2+) is bound by residues Glu-388, Cys-495, His-498, and Cys-519. Asp-523 serves as a coordination point for Mn(2+).

It belongs to the arenaviridae nucleocapsid protein family. Homomultimerizes to form the nucleocapsid. Binds to viral genomic RNA. Interacts with glycoprotein G2. Interacts with protein Z; this interaction probably directs the encapsidated genome to budding sites. Interacts with protein L; this interaction does not interfere with Z-L interaction. Interacts with host IKBKE (via Protein kinase domain); the interaction inhibits IKBKE kinase activity.

The protein resides in the virion. It is found in the host cytoplasm. Functionally, encapsidates the genome, protecting it from nucleases. The encapsidated genomic RNA is termed the nucleocapsid (NC). Serves as template for viral transcription and replication. The increased presence of protein N in host cell does not seem to trigger the switch from transcription to replication as observed in other negative strain RNA viruses. Through the interaction with host IKBKE, strongly inhibits the phosphorylation and nuclear translocation of host IRF3, a protein involved in interferon activation pathway, leading to the inhibition of interferon-beta and IRF3-dependent promoters activation. Also encodes a functional 3'-5' exoribonuclease that degrades preferentially dsRNA substrates and thereby participates in the suppression of interferon induction. The protein is Nucleoprotein of Sooretamys angouya (Paraguayan rice rat).